The chain runs to 150 residues: Transthyretin (150 aa).

The first 20 residues, 1–20 (MGSSSLLLVCLAGMVYLTEA), serve as a signal peptide directing secretion. The residue at position 33 (cysteine 33) is a Sulfocysteine. Lysine 38, glutamate 77, and serine 140 together coordinate L-thyroxine.

This sequence belongs to the transthyretin family. In terms of assembly, homotetramer. Dimer of dimers. In the homotetramer, subunits assemble around a central channel that can accommodate two ligand molecules. Interacts with RBP4. Post-translationally, sulfonation of the reactive cysteine Cys-33 enhances the stability of the native conformation of TTR, avoiding misassembly of the protein leading to amyloid formation. As to expression, detected in choroid plexus (at protein level). Detected in choroid plexus.

Its subcellular location is the secreted. Thyroid hormone-binding protein. Probably transports thyroxine from the bloodstream to the brain. The polypeptide is Transthyretin (TTR) (Tiliqua rugosa (Shingleback lizard)).